Consider the following 333-residue polypeptide: tRNA N6-adenosine threonylcarbamoyltransferase (333 aa).

Positions 111 and 115 each coordinate Fe cation. Residues 134 to 138 (LVSGG), D167, G180, and N272 contribute to the substrate site. D300 contacts Fe cation.

The protein belongs to the KAE1 / TsaD family. Fe(2+) serves as cofactor.

The protein localises to the cytoplasm. It catalyses the reaction L-threonylcarbamoyladenylate + adenosine(37) in tRNA = N(6)-L-threonylcarbamoyladenosine(37) in tRNA + AMP + H(+). Functionally, required for the formation of a threonylcarbamoyl group on adenosine at position 37 (t(6)A37) in tRNAs that read codons beginning with adenine. Is involved in the transfer of the threonylcarbamoyl moiety of threonylcarbamoyl-AMP (TC-AMP) to the N6 group of A37, together with TsaE and TsaB. TsaD likely plays a direct catalytic role in this reaction. The polypeptide is tRNA N6-adenosine threonylcarbamoyltransferase (Legionella pneumophila (strain Corby)).